We begin with the raw amino-acid sequence, 431 residues long: Glutamate-1-semialdehyde 2,1-aminomutase (431 aa).

N6-(pyridoxal phosphate)lysine is present on lysine 264.

It belongs to the class-III pyridoxal-phosphate-dependent aminotransferase family. HemL subfamily. As to quaternary structure, homodimer. Requires pyridoxal 5'-phosphate as cofactor.

It localises to the cytoplasm. The catalysed reaction is (S)-4-amino-5-oxopentanoate = 5-aminolevulinate. It participates in porphyrin-containing compound metabolism; protoporphyrin-IX biosynthesis; 5-aminolevulinate from L-glutamyl-tRNA(Glu): step 2/2. The protein is Glutamate-1-semialdehyde 2,1-aminomutase of Clostridium beijerinckii (strain ATCC 51743 / NCIMB 8052) (Clostridium acetobutylicum).